A 1058-amino-acid polypeptide reads, in one-letter code: Carbamoyl phosphate synthase large chain (1058 aa).

Positions 1 to 401 (MPKRKDIQKI…SLLKACRSLE (401 aa)) are carboxyphosphate synthetic domain. Positions 129, 169, 175, 176, 208, 210, 215, 241, 242, 243, 284, and 298 each coordinate ATP. An ATP-grasp 1 domain is found at 133 to 327 (KQLMQELDQP…IAKLAAKIAV (195 aa)). Q284, E298, and N300 together coordinate Mg(2+). Residues Q284, E298, and N300 each coordinate Mn(2+). Positions 402–546 (IGVCHNEMTS…YSTYELENES (145 aa)) are oligomerization domain. A carbamoyl phosphate synthetic domain region spans residues 547–929 (VQSNKESILV…ALYKAFEANN (383 aa)). One can recognise an ATP-grasp 2 domain in the interval 671-861 (EKALKELGIP…MAQIATKLIL (191 aa)). Residues R707, S746, I748, E752, G777, V778, H779, S780, Q820, and E832 each coordinate ATP. Residues Q820, E832, and N834 each coordinate Mg(2+). Residues Q820, E832, and N834 each coordinate Mn(2+). Residues 930–1058 (SHLSEFGQIV…ESRCFNIEAI (129 aa)) enclose the MGS-like domain. The segment at 930 to 1058 (SHLSEFGQIV…ESRCFNIEAI (129 aa)) is allosteric domain.

Belongs to the CarB family. In terms of assembly, composed of two chains; the small (or glutamine) chain promotes the hydrolysis of glutamine to ammonia, which is used by the large (or ammonia) chain to synthesize carbamoyl phosphate. Tetramer of heterodimers (alpha,beta)4. It depends on Mg(2+) as a cofactor. Mn(2+) is required as a cofactor.

The catalysed reaction is hydrogencarbonate + L-glutamine + 2 ATP + H2O = carbamoyl phosphate + L-glutamate + 2 ADP + phosphate + 2 H(+). It catalyses the reaction hydrogencarbonate + NH4(+) + 2 ATP = carbamoyl phosphate + 2 ADP + phosphate + 2 H(+). It participates in amino-acid biosynthesis; L-arginine biosynthesis; carbamoyl phosphate from bicarbonate: step 1/1. It functions in the pathway pyrimidine metabolism; UMP biosynthesis via de novo pathway; (S)-dihydroorotate from bicarbonate: step 1/3. Large subunit of the glutamine-dependent carbamoyl phosphate synthetase (CPSase). CPSase catalyzes the formation of carbamoyl phosphate from the ammonia moiety of glutamine, carbonate, and phosphate donated by ATP, constituting the first step of 2 biosynthetic pathways, one leading to arginine and/or urea and the other to pyrimidine nucleotides. The large subunit (synthetase) binds the substrates ammonia (free or transferred from glutamine from the small subunit), hydrogencarbonate and ATP and carries out an ATP-coupled ligase reaction, activating hydrogencarbonate by forming carboxy phosphate which reacts with ammonia to form carbamoyl phosphate. This is Carbamoyl phosphate synthase large chain from Streptococcus pyogenes serotype M6 (strain ATCC BAA-946 / MGAS10394).